The primary structure comprises 700 residues: Peroxisomal acyl-coenzyme A oxidase 1 (700 aa).

FAD contacts are provided by residues Thr147, Gly186, and 412 to 417 (CGGHGY). Glu437 functions as the Proton acceptor in the catalytic mechanism. A Microbody targeting signal motif is present at residues 698-700 (SKL).

It belongs to the acyl-CoA oxidase family. It depends on FAD as a cofactor.

Its subcellular location is the peroxisome. It catalyses the reaction a 2,3-saturated acyl-CoA + O2 = a (2E)-enoyl-CoA + H2O2. Catalyzes the desaturation of acyl-CoAs to 2-trans-enoyl-CoAs. First enzyme of the fatty acid beta-oxidation pathway. The polypeptide is Peroxisomal acyl-coenzyme A oxidase 1 (acox1) (Dictyostelium discoideum (Social amoeba)).